Here is a 494-residue protein sequence, read N- to C-terminus: Glutamate--tRNA ligase (494 aa).

The 'HIGH' region signature appears at 10–20; sequence PSPTGDPHVGT. Zn(2+) contacts are provided by Cys-107, Cys-109, Cys-134, and His-136. The 'KMSKS' region signature appears at 251 to 255; it reads KLSKR. Lys-254 provides a ligand contact to ATP.

Belongs to the class-I aminoacyl-tRNA synthetase family. Glutamate--tRNA ligase type 1 subfamily. In terms of assembly, monomer. The cofactor is Zn(2+).

The protein resides in the cytoplasm. It catalyses the reaction tRNA(Glu) + L-glutamate + ATP = L-glutamyl-tRNA(Glu) + AMP + diphosphate. Functionally, catalyzes the attachment of glutamate to tRNA(Glu) in a two-step reaction: glutamate is first activated by ATP to form Glu-AMP and then transferred to the acceptor end of tRNA(Glu). This is Glutamate--tRNA ligase from Pseudomonas aeruginosa (strain UCBPP-PA14).